We begin with the raw amino-acid sequence, 144 residues long: Protein archease (144 aa).

Positions 14, 143, and 144 each coordinate Ca(2+).

This sequence belongs to the archease family.

In terms of biological role, activates the tRNA-splicing ligase complex by facilitating the enzymatic turnover of catalytic subunit RtcB. Acts by promoting the guanylylation of RtcB, a key intermediate step in tRNA ligation. Can also alter the NTP specificity of RtcB such that ATP, dGTP or ITP is used efficiently. The protein is Protein archease of Aeropyrum pernix (strain ATCC 700893 / DSM 11879 / JCM 9820 / NBRC 100138 / K1).